The following is a 283-amino-acid chain: MLRRQARERREYLYRKAQELQESQLQQKRDLIKQALAQGKPLPKEVADDTKLQRDYQYDESAQESIDDEYSALSGIVDPKVIVTTSRDPSTRLSQFAKEVKLLFPTSVRLNRGNYIMKNLVDACQKSGTTDLVVLHEHRGVPTALTISHFPHGPTASFSLHNVVLRHDILNAGNQSEVHPHLIFDNFTTPLGQRVVKILKHMFPPGVKKDSPRVITFANRGDFISVRQHVYVKTRDGVELAEVGPRFEMKLYELTLGTLENKDADVEWQLRRFVRTANRKDYL.

Residues 79-260 (PKVIVTTSRD…LYELTLGTLE (182 aa)) enclose the Brix domain.

In terms of assembly, component of a heterotrimeric complex containing IMP3, IMP4 and MPP10.

The protein localises to the nucleus. It is found in the nucleolus. Component of the U3 small nucleolar ribonucleoprotein. Required for the early cleavages at sites A0, A1 and A2 during 18S ribosomal pre-RNA processing. In Eremothecium gossypii (strain ATCC 10895 / CBS 109.51 / FGSC 9923 / NRRL Y-1056) (Yeast), this protein is U3 small nucleolar ribonucleoprotein protein IMP4 (IMP4).